A 198-amino-acid chain; its full sequence is DNA damage response protein D (198 aa).

A disordered region spans residues 124–198 (SAAPTDPAGP…SEAGENTPAA (75 aa)). The segment covering 136–180 (PGTDRAERTAAERTASERATHDRASTERPARPRRSAEPEAVRTED) has biased composition (basic and acidic residues).

Functionally, appears to contribute to D.radiodurans capacity to survive exposure to ionizing radiation. May play a role in DNA repair and genome reconstitution. This Deinococcus radiodurans (strain ATCC 13939 / DSM 20539 / JCM 16871 / CCUG 27074 / LMG 4051 / NBRC 15346 / NCIMB 9279 / VKM B-1422 / R1) protein is DNA damage response protein D (ddrD).